A 187-amino-acid polypeptide reads, in one-letter code: UPF0301 protein CT0663 (187 aa).

Belongs to the UPF0301 (AlgH) family.

This chain is UPF0301 protein CT0663, found in Chlorobaculum tepidum (strain ATCC 49652 / DSM 12025 / NBRC 103806 / TLS) (Chlorobium tepidum).